Reading from the N-terminus, the 708-residue chain is Protein MICRORCHIDIA 5 (708 aa).

Polar residues predominate over residues 1–11 (MAESGSTNPKS). The segment at 1-47 (MAESGSTNPKSPSVVPDSTLGGLKRDLRNYHDGDDSNNLSIKKSKTT) is disordered. The span at 23–34 (LKRDLRNYHDGD) shows a compositional bias: basic and acidic residues. Residues 590 to 665 (SVNLEAELQK…LENRQEGVST (76 aa)) adopt a coiled-coil conformation. The Nuclear localization signal motif lies at 672-679 (ARRDVTED).

The protein belongs to the MORC ATPase protein family. Homodimer and heterodimer. Component of an RNA-directed DNA methylation (RdDM) complex. It depends on Mg(2+) as a cofactor. Mn(2+) serves as cofactor.

The protein resides in the nucleus. Its function is as follows. Exhibits ATPase activity. Binds DNA/RNA in a non-specific manner and exhibits endonuclease activity. Probably involved in DNA repair. Involved in RNA-directed DNA methylation (RdDM) as a component of the RdDM machinery and required for gene silencing. May also be involved in the regulation of chromatin architecture to maintain gene silencing. This chain is Protein MICRORCHIDIA 5, found in Arabidopsis thaliana (Mouse-ear cress).